Here is a 235-residue protein sequence, read N- to C-terminus: Chromosome partition protein MukE (235 aa).

A disordered region spans residues Gln204 to Val235.

Belongs to the MukE family. In terms of assembly, interacts, and probably forms a ternary complex, with MukF and MukB. The complex formation is stimulated by calcium or magnesium.

It is found in the cytoplasm. The protein localises to the nucleoid. Its function is as follows. Involved in chromosome condensation, segregation and cell cycle progression. May participate in facilitating chromosome segregation by condensation DNA from both sides of a centrally located replisome during cell division. Probably acts via its interaction with MukB and MukF. The protein is Chromosome partition protein MukE of Photobacterium profundum (strain SS9).